The following is a 240-amino-acid chain: MKMMDANEIISFIQKSEKKTPVKVYIKGDLKEVTFPETVQAFVNKKSGVLFGEWSEIKTILDENSKYIVDYVVENDRRNSAIPMLDLKGIKARIEPGAIIRDHVEIGDNAVIMMNATINIGAVIGEGSMIDMNAVLGGRATVGKNCHVGAGAVLAGVIEPPSAKPVIVEDDVVIGANVVVLEGVTVGKGAVVAAGAVVTEDVPPYTVVAGTPARVIKEIDEKTKAKTEIKQELRQLNPEK.

Belongs to the transferase hexapeptide repeat family. DapH subfamily.

It carries out the reaction (S)-2,3,4,5-tetrahydrodipicolinate + acetyl-CoA + H2O = L-2-acetamido-6-oxoheptanedioate + CoA. Its pathway is amino-acid biosynthesis; L-lysine biosynthesis via DAP pathway; LL-2,6-diaminopimelate from (S)-tetrahydrodipicolinate (acetylase route): step 1/3. Its function is as follows. Catalyzes the transfer of an acetyl group from acetyl-CoA to tetrahydrodipicolinate. The sequence is that of 2,3,4,5-tetrahydropyridine-2,6-dicarboxylate N-acetyltransferase from Bacillus anthracis (strain A0248).